The sequence spans 398 residues: 8-amino-7-oxononanoate synthase (398 aa).

Arg-23 is a substrate binding site. 110 to 111 is a binding site for pyridoxal 5'-phosphate; it reads GY. His-135 provides a ligand contact to substrate. Residues Ser-181, His-209, and Thr-237 each contribute to the pyridoxal 5'-phosphate site. Lys-240 is subject to N6-(pyridoxal phosphate)lysine. Thr-354 is a binding site for substrate.

The protein belongs to the class-II pyridoxal-phosphate-dependent aminotransferase family. BioF subfamily. As to quaternary structure, homodimer. Pyridoxal 5'-phosphate is required as a cofactor.

The enzyme catalyses 6-carboxyhexanoyl-[ACP] + L-alanine + H(+) = (8S)-8-amino-7-oxononanoate + holo-[ACP] + CO2. It functions in the pathway cofactor biosynthesis; biotin biosynthesis. In terms of biological role, catalyzes the decarboxylative condensation of pimeloyl-[acyl-carrier protein] and L-alanine to produce 8-amino-7-oxononanoate (AON), [acyl-carrier protein], and carbon dioxide. The protein is 8-amino-7-oxononanoate synthase of Anaeromyxobacter dehalogenans (strain 2CP-1 / ATCC BAA-258).